A 433-amino-acid polypeptide reads, in one-letter code: MDQRGGTMSRSASLFQQAAGLIPGGVNSPVRAFKSVGGIPPFIREAAGAMMTDEDGKSYIDYVGSWGPMILGHAPKEVVAAIQQAAVRGCSFGAPTSNEILLAQKLIELVPSLEMVRLVNSGTEATMSALRLARAATGRDAILKFDGCYHGHADSLLVAAGSGLATFGVPSSPGVTRGTAKDTLTVPFNDLAAVEACFAQHPEGIAAVIVEPVAGNMGCVLPRPGYLKGLRDICTKYGTILIFDEVMTGFRVDLRCAQGFYDVTPDLTCLGKVIGGGLPVGAYGGKMELMNQVSPAGPVYQAGTLSGNPLATAAGLATLEAISQPGFYETLTSRTQRLTVGIGKALDEAGIPHVSYHIGSMFGLFFTDAREVYNFADAAKNDHNRFKDWFHCMLEEGVYFAPSPYEAGFVSIAHDEAIIDLTIEKARKVAKTL.

Residue K272 is modified to N6-(pyridoxal phosphate)lysine.

This sequence belongs to the class-III pyridoxal-phosphate-dependent aminotransferase family. HemL subfamily. As to quaternary structure, homodimer. It depends on pyridoxal 5'-phosphate as a cofactor.

It localises to the cytoplasm. It catalyses the reaction (S)-4-amino-5-oxopentanoate = 5-aminolevulinate. Its pathway is porphyrin-containing compound metabolism; protoporphyrin-IX biosynthesis; 5-aminolevulinate from L-glutamyl-tRNA(Glu): step 2/2. The chain is Glutamate-1-semialdehyde 2,1-aminomutase from Magnetococcus marinus (strain ATCC BAA-1437 / JCM 17883 / MC-1).